The sequence spans 50 residues: Large ribosomal subunit protein bL32 (50 aa).

Basic residues predominate over residues methionine 1 to lysine 26. The interval methionine 1–asparagine 50 is disordered.

Belongs to the bacterial ribosomal protein bL32 family.

In Aliarcobacter butzleri (strain RM4018) (Arcobacter butzleri), this protein is Large ribosomal subunit protein bL32.